Reading from the N-terminus, the 300-residue chain is Ubiquinone biosynthesis protein COQ4, mitochondrial (300 aa).

Positions 173, 174, 177, and 189 each coordinate Zn(2+).

The protein belongs to the COQ4 family. Component of a multi-subunit COQ enzyme complex, composed of at least COQ3, COQ4, COQ5, COQ6, COQ7 and COQ9. The cofactor is Zn(2+).

Its subcellular location is the mitochondrion inner membrane. The catalysed reaction is a 4-hydroxy-3-methoxy-5-(all-trans-polyprenyl)benzoate + H(+) = a 2-methoxy-6-(all-trans-polyprenyl)phenol + CO2. Its pathway is cofactor biosynthesis; ubiquinone biosynthesis. Functionally, lyase that catalyzes the C1-decarboxylation of 4-hydroxy-3-methoxy-5-(all-trans-polyprenyl)benzoic acid into 2-methoxy-6-(all-trans-polyprenyl)phenol during ubiquinone biosynthesis. This chain is Ubiquinone biosynthesis protein COQ4, mitochondrial, found in Cryptococcus neoformans var. neoformans serotype D (strain B-3501A) (Filobasidiella neoformans).